Here is a 142-residue protein sequence, read N- to C-terminus: Large ribosomal subunit protein uL16 (142 aa).

Belongs to the universal ribosomal protein uL16 family. In terms of assembly, part of the 50S ribosomal subunit.

In terms of biological role, binds 23S rRNA and is also seen to make contacts with the A and possibly P site tRNAs. The chain is Large ribosomal subunit protein uL16 from Mycoplasmopsis pulmonis (strain UAB CTIP) (Mycoplasma pulmonis).